We begin with the raw amino-acid sequence, 433 residues long: MNKNIVILGTQWGDEGKGKVVDCLTKDSSYVVRYQGGHNAGHTLVVNDKKIILHLIPSGLLHKNVIGIIANGVVVSPFELIKEIKMLETHNIFVHKRLFISNSSPLILQYHIEMDIAREKKLGISALGTTGRGIGPAYEDKIARRALRIGDLKNEKTLSIRLEKIVNYYNHQLVSFYKHKPVDYKIILRDLLPTIDLIYDMIKDTTSILHTAIQSNKKIIFEGAQGSFLDIDHGTYPYVTSSNSTIGGVITGTGVGSKSLDYILGVTKAYSTRVGYGPFPTELFDDVDKHFSKKGHEFGSTTGRKRRTGWLDAVALCRSVRINSLSGLCITKLDVLDGLHEIKICTAYKNINTLEIISFPDIDEWKNIEPIYETYPGWNKKTLGIKKLIDLPYEARNYINRIEEITQIPVDIISTGPDRSDIIFVRDIFFIKK.

Residues 13–19 and 41–43 each bind GTP; these read GDEGKGK and GHT. D14 acts as the Proton acceptor in catalysis. Residues D14 and G41 each coordinate Mg(2+). Residues 14–17, 39–42, T130, R144, Q225, T240, and R304 contribute to the IMP site; these read DEGK and NAGH. H42 (proton donor) is an active-site residue. Residue 300 to 306 coordinates substrate; sequence STTGRKR. GTP is bound by residues R306, 332 to 334, and 414 to 416; these read KLD and STG.

This sequence belongs to the adenylosuccinate synthetase family. Homodimer. Requires Mg(2+) as cofactor.

Its subcellular location is the cytoplasm. The enzyme catalyses IMP + L-aspartate + GTP = N(6)-(1,2-dicarboxyethyl)-AMP + GDP + phosphate + 2 H(+). Its pathway is purine metabolism; AMP biosynthesis via de novo pathway; AMP from IMP: step 1/2. In terms of biological role, plays an important role in the de novo pathway of purine nucleotide biosynthesis. Catalyzes the first committed step in the biosynthesis of AMP from IMP. This Buchnera aphidicola subsp. Acyrthosiphon pisum (strain APS) (Acyrthosiphon pisum symbiotic bacterium) protein is Adenylosuccinate synthetase.